A 396-amino-acid polypeptide reads, in one-letter code: Gap junction gamma-1 protein (396 aa).

The Cytoplasmic segment spans residues 1 to 22; it reads MSWSFLTRLLEEIHNHSTFVGK. A helical membrane pass occupies residues 23–45; the sequence is IWLTVLIVFRIVLTAVGGESIYY. Residues 46 to 75 are Extracellular-facing; it reads DEQSKFVCNTEQPGCENVCYDAFAPLSHVR. The chain crosses the membrane as a helical span at residues 76–95; that stretch reads FWVFQIILVATPSVMYLGYA. Over 96–175 the chain is Cytoplasmic; the sequence is IHKIAKMEHG…RRIREDGLMK (80 aa). The interval 145–165 is disordered; it reads ELESEKENKEQNQSKPKHDGR. The segment covering 147–156 has biased composition (basic and acidic residues); it reads ESEKENKEQN. Residues 176-198 form a helical membrane-spanning segment; sequence IYVLQLLARTMFEVGFLIGQYFL. Residues 199–228 are Extracellular-facing; sequence YGFQVHPFYVCSRVPCPHKIDCFISRPTEK. Residues 229–248 form a helical membrane-spanning segment; that stretch reads TIFLLIMYGVTGLCLLLNIW. The Cytoplasmic portion of the chain corresponds to 249-396; the sequence is EMLHLGFGTI…SGDGKTSVWI (148 aa). A disordered region spans residues 357-396; it reads NHQNNPHGPREKKAKVGSKAGSNKSSASSKSGDGKTSVWI. The span at 373-396 shows a compositional bias: low complexity; that stretch reads GSKAGSNKSSASSKSGDGKTSVWI.

The protein belongs to the connexin family. Gamma-type subfamily. As to quaternary structure, a connexon is composed of a hexamer of connexins. Interacts with CNST.

Its subcellular location is the cell membrane. The protein resides in the cell junction. It localises to the gap junction. Functionally, one gap junction consists of a cluster of closely packed pairs of transmembrane channels, the connexons, through which materials of low MW diffuse from one cell to a neighboring cell. This chain is Gap junction gamma-1 protein (GJC1), found in Sus scrofa (Pig).